A 431-amino-acid polypeptide reads, in one-letter code: Ribonuclease TTHA0252 (431 aa).

Residues His59, His61, Asp63, His64, His141, Asp162, and His400 each coordinate Zn(2+).

It belongs to the metallo-beta-lactamase superfamily. RNA-metabolizing metallo-beta-lactamase-like family. In terms of assembly, monomer. It depends on Zn(2+) as a cofactor.

It is found in the cytoplasm. Inhibited by cadmium, cobalt, manganese, magnesium, calcium and nickel ions. Its function is as follows. Has endoribonuclease activity towards 23S and 16S rRNA (in vitro). This is Ribonuclease TTHA0252 from Thermus thermophilus (strain ATCC 27634 / DSM 579 / HB8).